A 250-amino-acid polypeptide reads, in one-letter code: Vitamin B12 import ATP-binding protein BtuD (250 aa).

An ABC transporter domain is found at 3–233; it reads LRQASVLPRL…EVLSPVFGVA (231 aa). Position 29–36 (29–36) interacts with ATP; it reads GPNGAGKS.

This sequence belongs to the ABC transporter superfamily. Vitamin B12 importer (TC 3.A.1.13.1) family. In terms of assembly, the complex is composed of two ATP-binding proteins (BtuD), two transmembrane proteins (BtuC) and a solute-binding protein (BtuF).

It localises to the cell inner membrane. The catalysed reaction is an R-cob(III)alamin(out) + ATP + H2O = an R-cob(III)alamin(in) + ADP + phosphate + H(+). In terms of biological role, part of the ABC transporter complex BtuCDF involved in vitamin B12 import. Responsible for energy coupling to the transport system. The polypeptide is Vitamin B12 import ATP-binding protein BtuD (Pectobacterium atrosepticum (strain SCRI 1043 / ATCC BAA-672) (Erwinia carotovora subsp. atroseptica)).